We begin with the raw amino-acid sequence, 765 residues long: Periplasmic beta-glucosidase (765 aa).

The N-terminal stretch at 1-20 is a signal peptide; the sequence is MKWLCSVGIAVSLALQPALA. Residue Asp287 is part of the active site.

It belongs to the glycosyl hydrolase 3 family.

The protein localises to the periplasm. The enzyme catalyses Hydrolysis of terminal, non-reducing beta-D-glucosyl residues with release of beta-D-glucose.. This chain is Periplasmic beta-glucosidase (bglX), found in Escherichia coli (strain K12).